A 76-amino-acid chain; its full sequence is Exodeoxyribonuclease 7 small subunit (76 aa).

It belongs to the XseB family. In terms of assembly, heterooligomer composed of large and small subunits.

Its subcellular location is the cytoplasm. The catalysed reaction is Exonucleolytic cleavage in either 5'- to 3'- or 3'- to 5'-direction to yield nucleoside 5'-phosphates.. Its function is as follows. Bidirectionally degrades single-stranded DNA into large acid-insoluble oligonucleotides, which are then degraded further into small acid-soluble oligonucleotides. The polypeptide is Exodeoxyribonuclease 7 small subunit (Arthrobacter sp. (strain FB24)).